A 965-amino-acid chain; its full sequence is Chondroitin synthase (965 aa).

Positions 132-418 (FTWYKNRKKS…IVKEKVPYIY (287 aa)) are galactosaminyltransferase; A1 domain. Residues P158, R162, D189, Y218, R224, and 240–241 (DC) each bind UDP-N-acetyl-alpha-D-galactosamine. D242 serves as a coordination point for Mn(2+). Position 362–363 (362–363 (ED)) interacts with UDP-N-acetyl-alpha-D-galactosamine. H387 provides a ligand contact to Mn(2+). The tract at residues 419–683 (RKLLPIEDSH…ESRKYIFNKT (265 aa)) is glucuronosyltransferase; A2 domain. UDP-alpha-D-glucuronate is bound by residues Y442, D470, and 518–521 (QLDS). D522 contributes to the Mn(2+) binding site. Residues H582 and 604–605 (AV) contribute to the UDP-alpha-D-glucuronate site. H632 provides a ligand contact to Mn(2+).

Belongs to the glycosyltransferase 2 family. CS/HAS subfamily. Mn(2+) serves as cofactor.

It localises to the cell membrane. The catalysed reaction is 3-O-(beta-D-GlcA-(1-&gt;3)-beta-D-GalNAc-(1-&gt;4)-beta-D-GlcA-(1-&gt;3)-beta-D-Gal-(1-&gt;3)-beta-D-Gal-(1-&gt;4)-beta-D-Xyl)-L-seryl-[protein] + UDP-N-acetyl-alpha-D-galactosamine = 3-O-(beta-D-GalNAc-(1-&gt;4)-beta-D-GlcA-(1-&gt;3)-beta-D-GalNAc-(1-&gt;4)-beta-D-GlcA-(1-&gt;3)-beta-D-Gal-(1-&gt;3)-beta-D-Gal-(1-&gt;4)-beta-D-Xyl)-L-seryl-[protein] + UDP + H(+). The enzyme catalyses 3-O-{beta-D-GlcA-(1-&gt;3)-[beta-D-GalNAc-(1-&gt;4)-beta-D-GlcA-(1-&gt;3)](n)-beta-D-GalNAc-(1-&gt;4)-beta-D-GlcA-(1-&gt;3)-beta-D-Gal-(1-&gt;3)-beta-D-Gal-(1-&gt;4)-beta-D-Xyl}-L-seryl-[protein] + UDP-N-acetyl-alpha-D-galactosamine = 3-O-{[beta-D-GalNAc-(1-&gt;4)-beta-D-GlcA-(1-&gt;3)](n+1)-beta-D-GalNAc-(1-&gt;4)-beta-D-GlcA-(1-&gt;3)-beta-D-Gal-(1-&gt;3)-beta-D-Gal-(1-&gt;4)-beta-D-Xyl}-L-seryl-[protein] + UDP + H(+). It carries out the reaction 3-O-(beta-D-GalNAc-(1-&gt;4)-beta-D-GlcA-(1-&gt;3)-beta-D-Gal-(1-&gt;3)-beta-D-Gal-(1-&gt;4)-beta-D-Xyl)-L-seryl-[protein] + UDP-alpha-D-glucuronate = 3-O-(beta-D-GlcA-(1-&gt;3)-beta-D-GalNAc-(1-&gt;4)-beta-D-GlcA-(1-&gt;3)-beta-D-Gal-(1-&gt;3)-beta-D-Gal-(1-&gt;4)-beta-D-Xyl)-L-seryl-[protein] + UDP + H(+). It catalyses the reaction 3-O-{[beta-D-GalNAc-(1-&gt;4)-beta-D-GlcA-(1-&gt;3)](n)-beta-D-GalNAc-(1-&gt;4)-beta-D-GlcA-(1-&gt;3)-beta-D-Gal-(1-&gt;3)-beta-D-Gal-(1-&gt;4)-beta-D-Xyl}-L-seryl-[protein] + UDP-alpha-D-glucuronate = 3-O-{beta-D-GlcA-(1-&gt;3)-[beta-D-GalNAc-(1-&gt;4)-beta-D-GlcA-(1-&gt;3)](n)-beta-D-GalNAc-(1-&gt;4)-beta-D-GlcA-(1-&gt;3)-beta-D-Gal-(1-&gt;3)-beta-D-Gal-(1-&gt;4)-beta-D-Xyl}-L-seryl-[protein] + UDP + H(+). Glycosyltransferase that catalyzes elongation of chondroitin, a polysaccharide composed of a repeating disaccharide of N-acetylgalactosamine (GalNAc) and glucuronic acid (GlcUA) units, by alternatively transferring the GlcUA and GalNAc moiety from UDP-GlcUA and UDP-GalNAc to the non-reducing ends of the chondroitin chain. Each chondroitin unit has the composition beta-(1-&gt;4)-GlcUA-beta-(1-&gt;3)-GalNAc. The chain is Chondroitin synthase (fcbD) from Pasteurella multocida (strain Pm70).